The following is a 375-amino-acid chain: Holliday junction branch migration complex subunit RuvB (375 aa).

Residues 1 to 50 (MAIVSSKSPDPAERRSQAKTKPSVSEPQDSLVRPQAAPEESQRPEDQIRP) are disordered. The interval 13–209 (ERRSQAKTKP…FGLVQRLRFY (197 aa)) is large ATPase domain (RuvB-L). The segment covering 19–28 (KTKPSVSEPQ) has biased composition (polar residues). Positions 40–49 (ESQRPEDQIR) are enriched in basic and acidic residues. ATP contacts are provided by residues I48, R49, G90, K93, T94, T95, 156-158 (EDF), R199, Y209, and R246. A Mg(2+)-binding site is contributed by T94. The small ATPAse domain (RuvB-S) stretch occupies residues 210-280 (EVEALTDIVQ…IAATALELYN (71 aa)). The segment at 283 to 375 (PCGLDWTDRR…LQQLLTEPET (93 aa)) is head domain (RuvB-H). DNA is bound by residues R338 and R343.

Belongs to the RuvB family. In terms of assembly, homohexamer. Forms an RuvA(8)-RuvB(12)-Holliday junction (HJ) complex. HJ DNA is sandwiched between 2 RuvA tetramers; dsDNA enters through RuvA and exits via RuvB. An RuvB hexamer assembles on each DNA strand where it exits the tetramer. Each RuvB hexamer is contacted by two RuvA subunits (via domain III) on 2 adjacent RuvB subunits; this complex drives branch migration. In the full resolvosome a probable DNA-RuvA(4)-RuvB(12)-RuvC(2) complex forms which resolves the HJ.

Its subcellular location is the cytoplasm. The catalysed reaction is ATP + H2O = ADP + phosphate + H(+). In terms of biological role, the RuvA-RuvB-RuvC complex processes Holliday junction (HJ) DNA during genetic recombination and DNA repair, while the RuvA-RuvB complex plays an important role in the rescue of blocked DNA replication forks via replication fork reversal (RFR). RuvA specifically binds to HJ cruciform DNA, conferring on it an open structure. The RuvB hexamer acts as an ATP-dependent pump, pulling dsDNA into and through the RuvAB complex. RuvB forms 2 homohexamers on either side of HJ DNA bound by 1 or 2 RuvA tetramers; 4 subunits per hexamer contact DNA at a time. Coordinated motions by a converter formed by DNA-disengaged RuvB subunits stimulates ATP hydrolysis and nucleotide exchange. Immobilization of the converter enables RuvB to convert the ATP-contained energy into a lever motion, pulling 2 nucleotides of DNA out of the RuvA tetramer per ATP hydrolyzed, thus driving DNA branch migration. The RuvB motors rotate together with the DNA substrate, which together with the progressing nucleotide cycle form the mechanistic basis for DNA recombination by continuous HJ branch migration. Branch migration allows RuvC to scan DNA until it finds its consensus sequence, where it cleaves and resolves cruciform DNA. The polypeptide is Holliday junction branch migration complex subunit RuvB (Synechococcus elongatus (strain ATCC 33912 / PCC 7942 / FACHB-805) (Anacystis nidulans R2)).